The following is a 261-amino-acid chain: Small ribosomal subunit protein eS4 (261 aa).

The S4 RNA-binding domain occupies 42-104; that stretch reads LPLVIFLRNR…TGEFFRLIYD (63 aa).

It belongs to the eukaryotic ribosomal protein eS4 family.

The chain is Small ribosomal subunit protein eS4 (RpS4) from Carabus granulatus (Ground beetle).